The sequence spans 138 residues: Cysteine desulfuration protein SufE (138 aa).

C51 (cysteine persulfide intermediate) is an active-site residue.

The protein belongs to the SufE family. As to quaternary structure, homodimer. Interacts with SufS.

The protein localises to the cytoplasm. It functions in the pathway cofactor biosynthesis; iron-sulfur cluster biosynthesis. Functionally, participates in cysteine desulfuration mediated by SufS. Cysteine desulfuration mobilizes sulfur from L-cysteine to yield L-alanine and constitutes an essential step in sulfur metabolism for biosynthesis of a variety of sulfur-containing biomolecules. Functions as a sulfur acceptor for SufS, by mediating the direct transfer of the sulfur atom from the S-sulfanylcysteine of SufS, an intermediate product of cysteine desulfuration process. The sequence is that of Cysteine desulfuration protein SufE from Pectobacterium carotovorum subsp. carotovorum (strain PC1).